Here is a 489-residue protein sequence, read N- to C-terminus: MARRNFKVLYVSGEVSPFVRISALADFMASFPQALEEEGFEARIMMPKYGTINDRKFRLHDVLRLSDIEVNLRDKTELLHVKVTALPSSKIQTYFLYNEKYFKRNGLFTDVHNGGDLKGNTEKVIFFNVGVLETLQRLGWKPDIIHCHDWYAGLLPLLLKTVYASNSFFSDVKTVLTVHNVYRQGILPFKVFQKLLPEEVSSALYRAGDNVNMLYTGAEHADLLTTTSRLYADEIVGNGSDTYGLGTVVEERKSTFHGILNGIDTRQWNPSTDKLIKKRYAADRLEGKLDNKKALLDEAGLPFTEGRPLAGIIIGFDAFQGAELLKESLVKLVELDMQLIICGSGDKEYEKYFQDFAAEYPEQVSVRTDYADTLLHLAIAGFDMLLMPGRIESCGMLQLFAMSYGTIPVAYAGGGIVETIDAVTDKSGSGFLFYDYTADAFAGKVQEALDLYHDEERWLQLVLEAMGKDFSWKNSAGEYDQLYRKLLEE.

Position 20 (Arg-20) interacts with ADP-alpha-D-glucose.

The protein belongs to the glycosyltransferase 1 family. Bacterial/plant glycogen synthase subfamily.

The enzyme catalyses [(1-&gt;4)-alpha-D-glucosyl](n) + ADP-alpha-D-glucose = [(1-&gt;4)-alpha-D-glucosyl](n+1) + ADP + H(+). It functions in the pathway glycan biosynthesis; glycogen biosynthesis. Its function is as follows. Synthesizes alpha-1,4-glucan chains using ADP-glucose. The polypeptide is Glycogen synthase (Chlorobium limicola (strain DSM 245 / NBRC 103803 / 6330)).